The chain runs to 309 residues: tRNA pseudouridine synthase B (309 aa).

Asp-39 acts as the Nucleophile in catalysis. The PUA domain occupies 229-306 (LPRVVVHQES…ERVLTLRKVF (78 aa)).

It belongs to the pseudouridine synthase TruB family. Type 1 subfamily.

The catalysed reaction is uridine(55) in tRNA = pseudouridine(55) in tRNA. In terms of biological role, responsible for synthesis of pseudouridine from uracil-55 in the psi GC loop of transfer RNAs. The polypeptide is tRNA pseudouridine synthase B (Thermotoga maritima (strain ATCC 43589 / DSM 3109 / JCM 10099 / NBRC 100826 / MSB8)).